Here is a 284-residue protein sequence, read N- to C-terminus: 4-hydroxybenzoate octaprenyltransferase (284 aa).

A run of 8 helical transmembrane segments spans residues 16–36 (PIGI…ASDG), 40–60 (WTLV…GCAV), 91–111 (LLVA…LNTL), 132–152 (FFAI…PMGF), 157–177 (NTVP…SVAY), 207–227 (AIIM…GWQF), 231–251 (IWFV…YTLI), and 259–279 (CFAA…GVAL).

This sequence belongs to the UbiA prenyltransferase family. Mg(2+) is required as a cofactor.

Its subcellular location is the cell inner membrane. It catalyses the reaction all-trans-octaprenyl diphosphate + 4-hydroxybenzoate = 4-hydroxy-3-(all-trans-octaprenyl)benzoate + diphosphate. The protein operates within cofactor biosynthesis; ubiquinone biosynthesis. Functionally, catalyzes the prenylation of para-hydroxybenzoate (PHB) with an all-trans polyprenyl group. Mediates the second step in the final reaction sequence of ubiquinone-8 (UQ-8) biosynthesis, which is the condensation of the polyisoprenoid side chain with PHB, generating the first membrane-bound Q intermediate 3-octaprenyl-4-hydroxybenzoate. This Janthinobacterium sp. (strain Marseille) (Minibacterium massiliensis) protein is 4-hydroxybenzoate octaprenyltransferase.